Consider the following 214-residue polypeptide: NADH-quinone oxidoreductase subunit C (214 aa).

The protein belongs to the complex I 30 kDa subunit family. In terms of assembly, NDH-1 is composed of 14 different subunits. Subunits NuoB, C, D, E, F, and G constitute the peripheral sector of the complex.

Its subcellular location is the cell inner membrane. The catalysed reaction is a quinone + NADH + 5 H(+)(in) = a quinol + NAD(+) + 4 H(+)(out). NDH-1 shuttles electrons from NADH, via FMN and iron-sulfur (Fe-S) centers, to quinones in the respiratory chain. The immediate electron acceptor for the enzyme in this species is believed to be ubiquinone. Couples the redox reaction to proton translocation (for every two electrons transferred, four hydrogen ions are translocated across the cytoplasmic membrane), and thus conserves the redox energy in a proton gradient. The sequence is that of NADH-quinone oxidoreductase subunit C from Francisella tularensis subsp. novicida (strain U112).